The following is a 487-amino-acid chain: b(0,+)-type amino acid transporter 1 (487 aa).

The tract at residues 1 to 20 (MEETSLRRRREDEKSTHSTE) is disordered. Residues 1-31 (MEETSLRRRREDEKSTHSTELKTTSLQKEVG) lie on the Cytoplasmic side of the membrane. Position 18 is a phosphoserine (S18). The chain crosses the membrane as a helical span at residues 32 to 55 (LLSGICIIVGTIIGSGIFISPKSV). 43–47 (IIGSG) is a binding site for L-arginine. At 56 to 62 (LANTESV) the chain is on the extracellular side. Residues 63–84 (GPCLIIWAACGILATLGALCFA) form a helical membrane-spanning segment. Residues 85 to 110 (ELGTMITKSGGEYPYLMEAFGPIPAY) are Cytoplasmic-facing. The chain crosses the membrane as a helical span at residues 111 to 137 (LFSWTSLIVMKPSSFAIICLSFSEYVC). The Extracellular segment spans residues 138–147 (AAFYSGCKPP). Helical transmembrane passes span 148–169 (AVVVKLLAAAAILFITTVNALS) and 170–193 (VRLGSYVQNVFTAAKMVIVAIIII). At 194–217 (SGLVFLAQGNVKNFQNSFEGTQTS) the chain is on the extracellular side. The helical transmembrane segment at 218–238 (VGAISLAFYNGLWAYDGWNQL) threads the bilayer. Position 233 (D233) interacts with L-arginine. Topologically, residues 239–251 (NYITEELRNPYRN) are cytoplasmic. A helical transmembrane segment spans residues 252-274 (LPMAIVIGIPLVTVCYILMNIAY). The Extracellular segment spans residues 275-302 (FTVMTPTELLQSQAVAVTFGDRVLYPAS). The chain crosses the membrane as a helical span at residues 303-325 (WVVPLFVAFSTIGAANGTCFTAG). Residues 326-351 (RLIYVAGREGHMLKVLSYISVKRLTP) are Cytoplasmic-facing. The next 2 membrane-spanning stretches (helical) occupy residues 352-370 (APALIFYGIIAIIYIIPGD) and 371-391 (INSLVNYFSFAAWLFYGMTIL). Residues 392 to 410 (GLVVMRFTRKDLERPIKVP) are Cytoplasmic-facing. A helical membrane pass occupies residues 411 to 431 (LFIPIIVILVSLFLILAPIIS). Residues 432–434 (EPA) lie on the Extracellular side of the membrane. The chain crosses the membrane as a helical span at residues 435-450 (WEYLYCVLFILSGLIF). The Cytoplasmic segment spans residues 451 to 487 (YFLFVYYKFGWAQRISRPVTKHLQMLMEVVPPEKDPE).

This sequence belongs to the amino acid-polyamine-organocation (APC) superfamily. Disulfide-linked heterodimer composed of the catalytic light chain subunit SLC7A9 and the heavy chain subunit SLC3A1. The heterodimer is the minimal functional unit. Assembles in heterotetramers (dimers of heterodimers) and higher order oligomers; the oligomerization is mediated by SLC3A1 likely to prevent degradation and facilitate heteromer trafficking to the plasma membrane. Interacts with CAV1. In terms of tissue distribution, expressed in the brush border membrane in the kidney (at protein level).

The protein localises to the apical cell membrane. It catalyses the reaction L-leucine(out) + L-arginine(in) = L-leucine(in) + L-arginine(out). It carries out the reaction L-histidine(out) + L-arginine(in) = L-histidine(in) + L-arginine(out). The catalysed reaction is L-arginine(in) + L-phenylalanine(out) = L-arginine(out) + L-phenylalanine(in). The enzyme catalyses L-cysteine(out) + L-arginine(in) = L-cysteine(in) + L-arginine(out). It catalyses the reaction L-cystine(out) + L-arginine(in) = L-cystine(in) + L-arginine(out). It carries out the reaction L-lysine(out) + L-arginine(in) = L-lysine(in) + L-arginine(out). Associates with SLC3A1 to form a functional transporter complex that mediates the electrogenic exchange between cationic amino acids and neutral amino acids, with a stoichiometry of 1:1. Has system b(0,+)-like activity with high affinity for extracellular cationic amino acids and L-cystine and lower affinity for intracellular neutral amino acids. Substrate exchange is driven by high concentration of intracellular neutral amino acids and the intracellular reduction of L-cystine to L-cysteine. Required for reabsorption of L-cystine and dibasic amino acids across the brush border membrane in renal proximal tubules. The protein is b(0,+)-type amino acid transporter 1 (Slc7a9) of Mus musculus (Mouse).